The chain runs to 424 residues: Histidine--tRNA ligase (424 aa).

The protein belongs to the class-II aminoacyl-tRNA synthetase family. As to quaternary structure, homodimer.

Its subcellular location is the cytoplasm. The enzyme catalyses tRNA(His) + L-histidine + ATP = L-histidyl-tRNA(His) + AMP + diphosphate + H(+). The chain is Histidine--tRNA ligase from Shewanella denitrificans (strain OS217 / ATCC BAA-1090 / DSM 15013).